Consider the following 143-residue polypeptide: Transcriptional regulator MraZ (143 aa).

2 consecutive SpoVT-AbrB domains span residues 5–47 and 76–119; these read EFQH…TLTE and AVEV…DRKL.

The protein belongs to the MraZ family. Forms oligomers.

The protein resides in the cytoplasm. Its subcellular location is the nucleoid. The polypeptide is Transcriptional regulator MraZ (Macrococcus caseolyticus (strain JCSC5402) (Macrococcoides caseolyticum)).